Here is a 583-residue protein sequence, read N- to C-terminus: ATP-dependent lipid A-core flippase (583 aa).

5 helical membrane-spanning segments follow: residues 27 to 47, 69 to 89, 142 to 162, 165 to 185, and 249 to 269; these read LAVA…MVSL, LLVF…TYCL, ALVS…LMFY, WQLS…IGFV, and AAAN…VLYL. The ABC transmembrane type-1 domain maps to 28–310; that stretch reads AVAVVALIIN…LTNVTSQFQR (283 aa). The region spanning 342–578 is the ABC transporter domain; that stretch reads VNVKDISFTY…DGAYAQLHRI (237 aa). 376–383 provides a ligand contact to ATP; that stretch reads GRSGSGKS.

The protein belongs to the ABC transporter superfamily. Lipid exporter (TC 3.A.1.106) family. As to quaternary structure, homodimer.

The protein localises to the cell inner membrane. It carries out the reaction ATP + H2O + lipid A-core oligosaccharideSide 1 = ADP + phosphate + lipid A-core oligosaccharideSide 2.. In terms of biological role, involved in lipopolysaccharide (LPS) biosynthesis. Translocates lipid A-core from the inner to the outer leaflet of the inner membrane. Transmembrane domains (TMD) form a pore in the inner membrane and the ATP-binding domain (NBD) is responsible for energy generation. This Vibrio vulnificus (strain CMCP6) protein is ATP-dependent lipid A-core flippase.